A 487-amino-acid chain; its full sequence is Sorting nexin-4 (487 aa).

The interval 1–59 (MDHDDFDSVSWRHGPDSDISRPTTSGTDTAESPETRRDPNGKRRMSSASEIPQAGPHAD) is disordered. Residues 20-32 (SRPTTSGTDTAES) show a composition bias toward polar residues. The PX domain occupies 70 to 192 (VLECRVDTPI…IFLESPDWNA (123 aa)). Arg-113, Thr-115, Lys-139, and Arg-158 together coordinate a 1,2-diacyl-sn-glycero-3-phospho-(1D-myo-inositol-3-phosphate). Residues 395–430 (EQSRRERMRKLELRIDELTREVESAKTTSEMFDEEV) are a coiled coil.

This sequence belongs to the sorting nexin family.

The protein resides in the cytoplasm. It localises to the cytosol. It is found in the preautophagosomal structure membrane. The protein localises to the endosome membrane. Sorting nexin, involved in the separation or division of vacuoles throughout the entire life cycle of the cells. Involved in retrieval of late-Golgi SNAREs from post-Golgi endosomes to the trans-Golgi network, for cytoplasm to vacuole transport (Cvt), and autophagy of large cargos including mitophagy, pexophagy and glycophagy. In Emericella nidulans (strain FGSC A4 / ATCC 38163 / CBS 112.46 / NRRL 194 / M139) (Aspergillus nidulans), this protein is Sorting nexin-4 (snx4).